Here is a 452-residue protein sequence, read N- to C-terminus: MLNDTIVAISSPIGTGAIGVVRISGDHVKNIIDQALKRKKYTPKKMYYGWLYDKEGEKVDEITWVYHSQPHSYTGEDMLEIFCHGGKLITYAVLNTIIKYGARQALPGEFTKRAVLNGKMDLIKAEAVNNVITSETEISLKASFNQLKNAVSEKIKDIKNSLLNISAQIEVEMDYPDDIEFEDHDLKNKLVHIVNSMNQLLKEAENGIIAVEGVRTVIVGKPNSGKSTLLNALLRKDRAIVTDIPGTTRDTIEENLNINGIYIRLIDTAGIRYTEDTLERVGIERTINSIKNSHLILFVLDGTTPFTQEDELIYNKLNELGDKTVIIILNKSDSPNFTENNYLSLKQKNPNDFVIISAKNGAIKNLENKIYEKFFEKVNIEEPTLTNQRQKITLESSKEFVLNAINSLEKGFSNDIIMYDVRKALEKIYELSGENYTEELLDKIFSTFCVGK.

The (6S)-5-formyl-5,6,7,8-tetrahydrofolate site is built by R22, E80, and K119. A TrmE-type G domain is found at 213-375; sequence GVRTVIVGKP…LENKIYEKFF (163 aa). N223 is a K(+) binding site. Residues 223–228, 242–248, and 267–270 contribute to the GTP site; these read NSGKST, TDIPGTT, and DTAG. S227 provides a ligand contact to Mg(2+). 3 residues coordinate K(+): T242, I244, and T247. Residue T248 coordinates Mg(2+). K452 provides a ligand contact to (6S)-5-formyl-5,6,7,8-tetrahydrofolate.

Belongs to the TRAFAC class TrmE-Era-EngA-EngB-Septin-like GTPase superfamily. TrmE GTPase family. In terms of assembly, homodimer. Heterotetramer of two MnmE and two MnmG subunits. K(+) serves as cofactor.

It localises to the cytoplasm. Its function is as follows. Exhibits a very high intrinsic GTPase hydrolysis rate. Involved in the addition of a carboxymethylaminomethyl (cmnm) group at the wobble position (U34) of certain tRNAs, forming tRNA-cmnm(5)s(2)U34. The sequence is that of tRNA modification GTPase MnmE from Petrotoga mobilis (strain DSM 10674 / SJ95).